Reading from the N-terminus, the 205-residue chain is HTH-type transcriptional regulator LuxR (205 aa).

Positions 15–75 constitute an HTH tetR-type domain; the sequence is LKRKQQLMEI…EVLNHVVRQF (61 aa). Residues 39 to 58 constitute a DNA-binding region (H-T-H motif); it reads HADIAEIAQVSVATVFNYFP.

Functionally, regulatory protein of bacterial bioluminescence. It probably binds the autoinducer molecule and potentiates the transcription of the bioluminescence operon. This chain is HTH-type transcriptional regulator LuxR (luxR), found in Vibrio harveyi (Beneckea harveyi).